We begin with the raw amino-acid sequence, 523 residues long: Spastin (523 aa).

The Cytoplasmic portion of the chain corresponds to 1-41 (MLDKLSKHKTMFYERVKEIDQILFSQQQAKQTQLDNLSNNN). The segment at residues 42–58 (ASGGFFSGFMKMFSPLS) is an intramembrane region (helical). Composition is skewed to low complexity over residues 57-71 (LSTP…NSNT), 171-184 (QQPP…QQQP), and 193-210 (TALR…TANN). 2 disordered regions span residues 57 to 77 (LSTP…AISQ) and 129 to 218 (GISS…LDQI). The Cytoplasmic segment spans residues 59 to 523 (TPPNSSSNNN…ESYGTFAKGI (465 aa)).

It belongs to the AAA ATPase family. Spastin subfamily. As to quaternary structure, homohexamer. The homohexamer is stabilized by ATP-binding. The homohexamer may adopt a ring conformation through which microtubules pass prior to being severed.

The protein localises to the membrane. The catalysed reaction is n ATP + n H2O + a microtubule = n ADP + n phosphate + (n+1) alpha/beta tubulin heterodimers.. Functionally, ATP-dependent microtubule severing protein. Stimulates microtubule minus-end depolymerization and poleward microtubule flux in the mitotic spindle. The sequence is that of Spastin from Naegleria gruberi (Amoeba).